An 86-amino-acid polypeptide reads, in one-letter code: Mitochondrial import inner membrane translocase subunit Tim10 (86 aa).

Residues 29–54 (CQAKCIATAFKESELTKGEAVCLDRC) carry the Twin CX3C motif motif. 2 disulfides stabilise this stretch: Cys29/Cys54 and Cys33/Cys50.

It belongs to the small Tim family. As to quaternary structure, heterohexamer; composed of 3 copies of tim-9/tin-9.1 and 3 copies of tim-10/tin-10, named soluble 70 kDa complex. The complex associates with the tim-22 component of the TIM22 complex. Interacts with multi-pass transmembrane proteins in transit.

Its subcellular location is the mitochondrion inner membrane. Mitochondrial intermembrane chaperone that participates in the import and insertion of multi-pass transmembrane proteins into the mitochondrial inner membrane. May also be required for the transfer of beta-barrel precursors from the TOM complex to the sorting and assembly machinery (SAM complex) of the outer membrane. Acts as a chaperone-like protein that protects the hydrophobic precursors from aggregation and guide them through the mitochondrial intermembrane space. This Caenorhabditis briggsae protein is Mitochondrial import inner membrane translocase subunit Tim10 (tin-10).